A 249-amino-acid chain; its full sequence is Chymase (249 aa).

Residues 1–19 (MHCLPLTLLLLLLCSRAEA) form the signal peptide. A propeptide spans 20–21 (EE) (activation peptide). Positions 22 to 245 (IIGGTESKPH…YRPWINKVLK (224 aa)) constitute a Peptidase S1 domain. Cys51 and Cys67 are joined by a disulfide. Catalysis depends on charge relay system residues His66 and Asp110. Disulfide bonds link Cys144/Cys209 and Cys175/Cys188. Catalysis depends on Ser203, which acts as the Charge relay system.

Belongs to the peptidase S1 family. Granzyme subfamily.

The protein resides in the secreted. It localises to the cytoplasmic granule. The enzyme catalyses Preferential cleavage: Phe-|-Xaa &gt; Tyr-|-Xaa &gt; Trp-|-Xaa &gt; Leu-|-Xaa.. Its function is as follows. Major secreted protease of mast cells with suspected roles in vasoactive peptide generation, extracellular matrix degradation, and regulation of gland secretion. The chain is Chymase (CMA1) from Canis lupus familiaris (Dog).